The chain runs to 587 residues: Integrator complex subunit 14 (587 aa).

The VWFA domain maps to Thr-3–Asp-113. Disordered regions lie at residues Lys-190 to Leu-211 and Arg-304 to Asn-331.

The protein belongs to the Integrator subunit 14 family. Belongs to the multiprotein complex Integrator, at least composed of IntS1, IntS2, IntS3, IntS4, omd/IntS5, IntS6, defl/IntS7, IntS8, IntS9, IntS10, IntS11, IntS12, asun/IntS13, IntS14 and IntS15. The core complex associates with protein phosphatase 2A subunits mts/PP2A and Pp2A-29B, to form the Integrator-PP2A (INTAC) complex.

The protein resides in the nucleus. Component of the integrator complex, a multiprotein complex that terminates RNA polymerase II (Pol II) transcription in the promoter-proximal region of genes. The integrator complex provides a quality checkpoint during transcription elongation by driving premature transcription termination of transcripts that are unfavorably configured for transcriptional elongation: the complex terminates transcription by (1) catalyzing dephosphorylation of the C-terminal domain (CTD) of Pol II subunit Polr2A/Rbp1 and Spt5, and (2) degrading the exiting nascent RNA transcript via endonuclease activity. The integrator complex is also involved in the 3'-end processing of the U7 snRNA, and also the spliceosomal snRNAs U1, U2, U4 and U5. The sequence is that of Integrator complex subunit 14 from Drosophila melanogaster (Fruit fly).